A 1019-amino-acid chain; its full sequence is Enteropeptidase (1019 aa).

Gly2 carries N-myristoyl glycine lipidation. The Cytoplasmic portion of the chain corresponds to 2-18; sequence GSKRGISSRHHSLSSYE. Residues 19–47 form a helical; Signal-anchor for type II membrane protein membrane-spanning segment; the sequence is IMFAALFAILVVLCAGLIAVSCLTIKESQ. The Extracellular segment spans residues 48–1019; that stretch reads RGAALGQSHE…FTEWIQSFLH (972 aa). Residues 54 to 169 enclose the SEA domain; that stretch reads QSHEARATFK…NSVDILDKLT (116 aa). 3 N-linked (GlcNAc...) asparagine glycosylation sites follow: Asn116, Asn147, and Asn179. An LDL-receptor class A 1 domain is found at 182–223; that stretch reads IECLPGSSPCTDALTCIKADLFCDGEVNCPDGSDEDNKMCAT. Cystine bridges form between Cys184/Cys197, Cys191/Cys210, Cys204/Cys221, and Cys225/Cys253. The CUB 1 domain occupies 225-334; sequence CDGRFLLTGS…VGFNATYTAF (110 aa). N-linked (GlcNAc...) asparagine glycosylation is found at Asn328, Asn335, Asn388, Asn440, Asn470, Asn503, Asn534, and Asn630. The 163-residue stretch at 342–504 folds into the MAM domain; sequence YEKINCNFED…ISLTYGICNG (163 aa). The cysteines at positions 524 and 552 are disulfide-linked. The 111-residue stretch at 524–634 folds into the CUB 2 domain; it reads CGGPFELWEP…GGFKANFTTG (111 aa). The LDL-receptor class A 2 domain occupies 641–679; the sequence is EPCKADHFQCKNGECVPLVNLCDGHLHCEDGSDEADCVR. Disulfide bonds link Cys643–Cys655, Cys650–Cys668, and Cys662–Cys677. The region spanning 678-771 is the SRCR domain; it reads VRFFNGTTNN…LIRLQCNHKS (94 aa). Asn682, Asn706, and Asn725 each carry an N-linked (GlcNAc...) asparagine glycan. 3 disulfides stabilise this stretch: Cys757-Cys767, Cys772-Cys896, and Cys810-Cys826. The region spanning 785 to 1019 is the Peptidase S1 domain; it reads IVGGSNAKEG…FTEWIQSFLH (235 aa). The active-site Charge relay system is His825. A glycan (N-linked (GlcNAc...) asparagine) is linked at Asn848. Asp876 acts as the Charge relay system in catalysis. Residues Asn887, Asn909, and Asn949 are each glycosylated (N-linked (GlcNAc...) asparagine). 3 disulfide bridges follow: Cys910/Cys977, Cys941/Cys956, and Cys967/Cys995. The Charge relay system role is filled by Ser971.

This sequence belongs to the peptidase S1 family. In terms of assembly, heterodimer of a catalytic (light) chain and a multidomain (heavy) chain linked by a disulfide bond. In terms of processing, the chains are derived from a single precursor that is cleaved by a trypsin-like protease. In terms of tissue distribution, intestinal brush border.

Its subcellular location is the membrane. The enzyme catalyses Activation of trypsinogen by selective cleavage of 6-Lys-|-Ile-7 bond.. Functionally, responsible for initiating activation of pancreatic proteolytic proenzymes (trypsin, chymotrypsin and carboxypeptidase A). It catalyzes the conversion of trypsinogen to trypsin which in turn activates other proenzymes including chymotrypsinogen, procarboxypeptidases, and proelastases. The polypeptide is Enteropeptidase (TMPRSS15) (Homo sapiens (Human)).